A 314-amino-acid chain; its full sequence is Olfactory receptor 5P81 (314 aa).

Over 1–28 (MAFLEDGNHTVVTEFILLGLTDDPVLRV) the chain is Extracellular. N-linked (GlcNAc...) asparagine glycosylation occurs at Asn-8. The chain crosses the membrane as a helical span at residues 29–49 (ILFIIILCIYLVTVSGNLSTI). Residues 50-57 (LLIRVSSQ) are Cytoplasmic-facing. Residues 58–78 (LHHPMYFFLSHLASIDIAISS) form a helical membrane-spanning segment. The Extracellular portion of the chain corresponds to 79–102 (SVTPNMVVNFLVERSSISYIGCGI). Residues Cys-100 and Cys-192 are joined by a disulfide bond. The helical transmembrane segment at 103–123 (QLGSAVFFGAIECFLLAVMAY) threads the bilayer. Residues 124–136 (DRFVAICNPLLYS) are Cytoplasmic-facing. The helical transmembrane segment at 137–157 (TKMSKQVCIQLLVGSYIGGFI) threads the bilayer. Residues 158–199 (HASFFTLSFVSFLFCGPNRINHFFCDFTPLVELSCSDNSVLI) are Extracellular-facing. The helical transmembrane segment at 200–220 (ILDSFSTGTIIVITVFVIAIS) threads the bilayer. At 221–240 (YTCILITILKMHSTEGRHKA) the chain is on the cytoplasmic side. The chain crosses the membrane as a helical span at residues 241-261 (FSTCTSHLTVVTLLYGTVTFI). The Extracellular segment spans residues 262–274 (YVMPKSSYSTDQN). The chain crosses the membrane as a helical span at residues 275-295 (KVISVFYMVVIPMLNPIIYSL). The Cytoplasmic segment spans residues 296-314 (RNNEIKGALKKQLGEKNIF).

Belongs to the G-protein coupled receptor 1 family.

It localises to the cell membrane. Functionally, potential odorant receptor. The polypeptide is Olfactory receptor 5P81 (Mus musculus (Mouse)).